The following is a 142-amino-acid chain: Large ribosomal subunit protein uL11 (142 aa).

This sequence belongs to the universal ribosomal protein uL11 family. Part of the ribosomal stalk of the 50S ribosomal subunit. Interacts with L10 and the large rRNA to form the base of the stalk. L10 forms an elongated spine to which L12 dimers bind in a sequential fashion forming a multimeric L10(L12)X complex. Post-translationally, one or more lysine residues are methylated.

Forms part of the ribosomal stalk which helps the ribosome interact with GTP-bound translation factors. The chain is Large ribosomal subunit protein uL11 from Xanthomonas campestris pv. campestris (strain 8004).